The chain runs to 90 residues: Albumin (90 aa).

Ser5 bears the Phosphoserine mark. Positions 6 and 13 each coordinate Ca(2+). The Albumin domain maps to 25–90 (LLRHLVDEPQ…LVASTQAALA (66 aa)). Position 61 is a phosphoserine (Ser61). 2 positions are modified to phosphothreonine: Thr62 and Thr64. The residue at position 80 (Lys80) is an N6-methyllysine.

The protein belongs to the ALB/AFP/VDB family. Interacts with FCGRT; this interaction regulates ALB homeostasis. Interacts with TASOR. In plasma, occurs in a covalently-linked complex with chromophore-bound alpha-1-microglobulin; this interaction does not prevent fatty acid binding to ALB. Plasma.

It localises to the secreted. Its function is as follows. Binds water, Ca(2+), Na(+), K(+), fatty acids, hormones, bilirubin and drugs. Its main function is the regulation of the colloidal osmotic pressure of blood. Major zinc transporter in plasma, typically binds about 80% of all plasma zinc. Major calcium and magnesium transporter in plasma, binds approximately 45% of circulating calcium and magnesium in plasma. Potentially has more than two calcium-binding sites and might additionally bind calcium in a non-specific manner. The shared binding site between zinc and calcium suggests a crosstalk between zinc and calcium transport in the blood. The rank order of affinity is zinc &gt; calcium &gt; magnesium. Binds to the bacterial siderophore enterobactin and inhibits enterobactin-mediated iron uptake of E.coli from ferric transferrin, and may thereby limit the utilization of iron and growth of enteric bacteria such as E.coli. Does not prevent iron uptake by the bacterial siderophore aerobactin. This is Albumin from Capra hircus (Goat).